A 149-amino-acid polypeptide reads, in one-letter code: Transcriptional repressor NrdR (149 aa).

The segment at 3-34 (CPFCGFEESKVVDSRSTDDNTTIRRRRECLKC) is a zinc-finger region. The 91-residue stretch at 49-139 (ILVIKKDLTR…VYRQFKDIDT (91 aa)) folds into the ATP-cone domain.

The protein belongs to the NrdR family. It depends on Zn(2+) as a cofactor.

Its function is as follows. Negatively regulates transcription of bacterial ribonucleotide reductase nrd genes and operons by binding to NrdR-boxes. In Clostridium beijerinckii (strain ATCC 51743 / NCIMB 8052) (Clostridium acetobutylicum), this protein is Transcriptional repressor NrdR.